A 107-amino-acid polypeptide reads, in one-letter code: UPF0145 protein Ent638_1382 (107 aa).

This sequence belongs to the UPF0145 family.

This Enterobacter sp. (strain 638) protein is UPF0145 protein Ent638_1382.